A 363-amino-acid polypeptide reads, in one-letter code: MAP kinase kinase mkk-4 (363 aa).

Residues 1–38 (MVQEDDENLRNSMSLRPTSLSTRPTSLSVNGNEKTLPE) are disordered. Low complexity predominate over residues 14-28 (SLRPTSLSTRPTSLS). The Protein kinase domain maps to 66–330 (LQDLGAIGNG…YDTLKSFDFY (265 aa)). Residues 72 to 80 (IGNGNFGTV) and Lys95 each bind ATP. The Proton acceptor role is filled by Asp194.

This sequence belongs to the protein kinase superfamily. STE Ser/Thr protein kinase family. MAP kinase kinase subfamily. Expressed in the pharynx, including the corpus, isthmus and terminal bulb.

The protein localises to the cytoplasm. It carries out the reaction L-seryl-[protein] + ATP = O-phospho-L-seryl-[protein] + ADP + H(+). It catalyses the reaction L-threonyl-[protein] + ATP = O-phospho-L-threonyl-[protein] + ADP + H(+). The catalysed reaction is L-tyrosyl-[protein] + ATP = O-phospho-L-tyrosyl-[protein] + ADP + H(+). In terms of biological role, activity is required in presynaptic neurons, in a dose-dependent manner, for normal presynaptic development and morphology. Plays a role in the formation of muscle connections, also called muscle arm extensions, between the body wall and the motor axons in the dorsal and ventral cord. The sequence is that of MAP kinase kinase mkk-4 (mkk-4) from Caenorhabditis elegans.